The sequence spans 168 residues: Cofilin-1-A (168 aa).

A2 carries the N-acetylalanine modification. The ADF-H domain maps to 4 to 153; the sequence is GVMVSDDVIK…NDPCNLADKL (150 aa). Residues 30–34 carry the Nuclear localization signal motif; that stretch reads KKRKK.

This sequence belongs to the actin-binding proteins ADF family. Post-translationally, inactive when phosphorylated. Phosphorylation levels vary during development. Oocytes contain only the phosphorylated form, and 80-95% of cfl1 protein is phosphorylated in unfertilized eggs. Rapid dephosphorylation occurs within 30 minutes after fertilization. Phosphorylation levels increase again between the morula and blastula stages (5-8 hpf) and then decrease again as gastrulation approaches. Dephosphorylated by pdxp. As to expression, expressed diffusely in both animal and vegetal hemispheres of the oocyte. During cleavage, expression accumulates around the cleavage furrow, along the vegetal membrane, and later in the midbody. Strongly expressed in the animal hemisphere during blastula stages, with most cells showing expression by gastrulation. By stage 17, expression is highest in cells of the developing neuroectoderm, and at stage 24 the notochord, neural tube, neural crest, somites and some cells of the archenteron show high expression. By stage 35, expression has declined in the notochord, but remains in the neural tube, epidermis and a layer of cells in the archenteron. Also highly expressed in the retina and neuronal cell bodies at the base of the cement gland but not the cement gland itself. At stage 38, expression is widespread, being highest in the nervous system and retina. In the adult, expression is high in the brain, heart, oocyte, stomach, and low in skeletal muscle.

The protein resides in the nucleus matrix. It localises to the cytoplasm. Its subcellular location is the cytoskeleton. It is found in the cell cortex. The protein localises to the membrane. May play a role in the regulation of cell morphology and cytoskeletal organization. Binds to F-actin and exhibits pH-sensitive F-actin depolymerizing activity. Required for formation of the cleavage furrow during cytokinesis. The polypeptide is Cofilin-1-A (cfl1-a) (Xenopus laevis (African clawed frog)).